Here is a 326-residue protein sequence, read N- to C-terminus: Autophagy protein 5 (326 aa).

Lys163 is covalently cross-linked (Glycyl lysine isopeptide (Lys-Gly) (interchain with G-Cter in atg12)).

It belongs to the ATG5 family. As to quaternary structure, conjugated with atg12. In terms of processing, conjugated to atg12; which is essential for autophagy.

Its subcellular location is the preautophagosomal structure membrane. In terms of biological role, involved in cytoplasm to vacuole transport (Cvt) and autophagic vesicle formation. Autophagy is essential for maintenance of amino acid levels and protein synthesis under nitrogen starvation. Required for selective autophagic degradation of the nucleus (nucleophagy). Also required for mitophagy, which eliminates defective or superfluous mitochondria in order to fulfill cellular energy requirements and prevent excess ROS production. Conjugation with atg12, through a ubiquitin-like conjugating system involving atg7 as an E1-like activating enzyme and atg10 as an E2-like conjugating enzyme, is essential for its function. The atg12-atg5 conjugate acts as an E3-like enzyme which is required for lipidation of atg8 and atg8 association to the vesicle membranes. In Aspergillus fumigatus (strain ATCC MYA-4609 / CBS 101355 / FGSC A1100 / Af293) (Neosartorya fumigata), this protein is Autophagy protein 5 (atg5).